The sequence spans 232 residues: Large ribosomal subunit protein uL1 (232 aa).

The protein belongs to the universal ribosomal protein uL1 family. As to quaternary structure, part of the 50S ribosomal subunit.

Functionally, binds directly to 23S rRNA. The L1 stalk is quite mobile in the ribosome, and is involved in E site tRNA release. In terms of biological role, protein L1 is also a translational repressor protein, it controls the translation of the L11 operon by binding to its mRNA. The sequence is that of Large ribosomal subunit protein uL1 from Roseobacter denitrificans (strain ATCC 33942 / OCh 114) (Erythrobacter sp. (strain OCh 114)).